Consider the following 2664-residue polypeptide: Inositol 1,4,5-trisphosphate-gated calcium channel ITPR3 (2664 aa).

Topologically, residues Met1–Leu2227 are cytoplasmic. MIR domains are found at residues Gly113–Asn173, Gly174–Phe224, Glu232–Val288, Gly295–Thr372, and Asp378–Val434. 1D-myo-inositol 1,4,5-trisphosphate-binding residues include Arg266, Thr268, Leu269, and Arg270. Residues Asn320–Arg344 are disordered. The 1D-myo-inositol 1,4,5-trisphosphate site is built by Arg503, Lys507, Arg510, Tyr567, Arg568, and Lys569. Arg743 provides a ligand contact to Ca(2+). Phosphoserine occurs at positions 909 and 927. Ca(2+)-binding residues include Glu1115 and Glu1118. 2 disordered regions span residues Lys1124–Ser1158 and Gln1790–Arg1850. The segment covering Glu1792–Gly1805 has biased composition (polar residues). Phosphoserine is present on residues Ser1806, Ser1825, and Ser1827. Residues Glu1875 and Glu1939 each contribute to the Ca(2+) site. The ATP site is built by Ala1989, Glu2142, and Lys2145. The helical transmembrane segment at Gly2228 to Phe2248 threads the bilayer. Topologically, residues Thr2249–Pro2256 are extracellular. The helical transmembrane segment at Leu2257–Ile2277 threads the bilayer. Residues Leu2278–Lys2286 lie on the Cytoplasmic side of the membrane. The chain crosses the membrane as a helical span at residues Ile2287–Tyr2304. Residues Lys2305–Gly2318 are Extracellular-facing. A helical transmembrane segment spans residues Tyr2319–Phe2339. Residues Asp2340–Ser2361 are Cytoplasmic-facing. Residues Ile2362 to Leu2382 form a helical membrane-spanning segment. At Phe2383–Tyr2489 the chain is on the extracellular side. Cys2448 and Cys2454 are joined by a disulfide. A helical transmembrane segment spans residues Asp2490–Ile2510. Residues Asp2511–Arg2664 lie on the Cytoplasmic side of the membrane. ATP contacts are provided by Cys2531 and Phe2532. Residue Cys2531 participates in Zn(2+) binding. 2 residues coordinate Zn(2+): Cys2534 and His2551. Positions 2553, 2556, 2557, and 2558 each coordinate ATP. His2556 contacts Zn(2+). Thr2574 contributes to the Ca(2+) binding site. Residues Ser2602 and Ser2663 each carry the phosphoserine modification.

Belongs to the InsP3 receptor family. In terms of assembly, homotetramer. Homodimer. Interacts with TRPC1, TRPC3 and TRPC4. Interacts with TRPV4. Interacts with SIGMAR1. Interacts with PML and AKT1. Interacts with IRAG2 (via coiled-coil domain). Interacts with CABP1. Interacts with TMBIM4/LFG4. Interacts with CEMIP. Interacts with TESPA1. Interacts with TMEM203. Interacts with BOK; regulates ITPR3 expression. Interacts with BCL2L10. Interacts with CHGA and CHGB. Post-translationally, phosphorylated by AKT1 on serine and/or threonine residues.

It is found in the endoplasmic reticulum membrane. It localises to the cytoplasmic vesicle. The protein resides in the secretory vesicle membrane. It carries out the reaction Ca(2+)(in) = Ca(2+)(out). With respect to regulation, inositol 1,4,5-trisphosphate-gated calcium channel is regulated by cytosolic calcium in a biphasic manner. At low concentrations, cytosolic calcium binds at a high-affinity juxtamembrane domain (JD) calcium binding site, allowing ITPR3 to activate by escaping a low-energy resting state through an ensemble of preactivated states. At high cytosolic calcium concentrations, ITPR3 preferentially enters an inhibited state stabilized by calcium binding at a second, low-affinity cytoplasmic domain (CD) calcium binding site. Inositol 1,4,5-trisphosphate-gated calcium channel that, upon 1D-myo-inositol 1,4,5-trisphosphate binding, transports calcium from the endoplasmic reticulum lumen to cytoplasm, thus releasing the intracellular calcium and therefore participates in cellular calcium ion homeostasis. 1D-myo-inositol 1,4,5-trisphosphate binds to the ligand-free channel without altering its global conformation, yielding the low-energy resting state, then progresses through resting-to preactivated transitions to the higher energy preactivated state, which increases affinity for calcium, promoting binding of the low basal cytosolic calcium at the juxtamembrane domain (JD) site, favoring the transition through the ensemble of high-energy intermediate states along the trajectory to the fully-open activated state. Upon opening, releases calcium in the cytosol where it can bind to the low-affinity cytoplasmic domain (CD) site and stabilizes the inhibited state to terminate calcium release. The sequence is that of Inositol 1,4,5-trisphosphate-gated calcium channel ITPR3 from Bos taurus (Bovine).